A 1439-amino-acid polypeptide reads, in one-letter code: Microtubule organization protein AKNA (1439 aa).

Composition is skewed to basic and acidic residues over residues M1–W10 and A25–R35. The segment at M1–P394 is disordered. S52 carries the post-translational modification Phosphoserine. Positions W71–S83 are enriched in basic and acidic residues. The segment covering S89 to D99 has biased composition (acidic residues). The span at Q263–H275 shows a compositional bias: polar residues. Basic and acidic residues predominate over residues A276–T285. Phosphoserine occurs at positions 316, 499, and 534. Disordered stretches follow at residues S507–Q562 and I659–P682. Low complexity predominate over residues L533–L544. S767 and S770 each carry phosphoserine. Residues L771–T804 form a PEST region. Disordered regions lie at residues M775–E942 and I977–R1005. The span at E778 to G792 shows a compositional bias: acidic residues. S848 is modified (phosphoserine). A compositionally biased stretch (pro residues) spans P865 to P875. Polar residues-rich tracts occupy residues S879–E891, S929–T940, and E983–S999. S886 carries the post-translational modification Phosphoserine. Residues H911–S932 form a PEST region. Residues S997 and S1010 each carry the phosphoserine modification. The segment at L1095 to E1165 is disordered. The a.T hook DNA-binding region spans R1115–S1123. A compositionally biased stretch (basic and acidic residues) spans S1135 to E1147. Phosphoserine is present on residues S1172 and S1173. Residues L1180–D1211 form a disordered region. S1228 carries the post-translational modification Phosphoserine. The segment at A1252 to A1329 is disordered. The segment covering S1303–S1317 has biased composition (polar residues). A phosphoserine mark is found at S1377, S1387, and S1424.

This sequence belongs to the AKNA family. Interacts with DCTN1. Interacts with MAPRE1/EB1. Interacts with ODF2. Interacts with CAMSAP3. Phosphorylated; phosphorylation regulates dissociation from and reassembly at the centrosome. As to expression, predominantly expressed by lymphoid tissues. Highly expressed in the spleen, lymph nodes and peripheral blood leukocytes, expressed at lower level in the thymus. Mainly expressed by germinal center B-lymphocytes, a stage in which receptor and ligand interactions are crucial for B-lymphocyte maturation. Expressed by B- and T-lymphocytes, Natural killer cells and CD1a(+)CD14(-) but not CD1a(-)CD14(+) dendritic cells. Weakly or not expressed in fetal liver and in adult bone marrow.

The protein localises to the cytoplasm. It is found in the cytoskeleton. Its subcellular location is the microtubule organizing center. The protein resides in the centrosome. It localises to the centriole. The protein localises to the nucleus. Functionally, centrosomal protein that plays a key role in cell delamination by regulating microtubule organization. Required for the delamination and retention of neural stem cells from the subventricular zone during neurogenesis. Also regulates the epithelial-to-mesenchymal transition in other epithelial cells. Acts by increasing centrosomal microtubule nucleation and recruiting nucleation factors and minus-end stabilizers, thereby destabilizing microtubules at the adherens junctions and mediating constriction of the apical endfoot. In addition, may also act as a transcription factor that specifically activates the expression of the CD40 receptor and its ligand CD40L/CD154, two cell surface molecules on lymphocytes that are critical for antigen-dependent-B-cell development. Binds to A/T-rich promoters. It is unclear how it can both act as a microtubule organizer and as a transcription factor; additional evidences are required to reconcile these two apparently contradictory functions. This is Microtubule organization protein AKNA from Homo sapiens (Human).